We begin with the raw amino-acid sequence, 855 residues long: Cone cGMP-specific 3',5'-cyclic phosphodiesterase subunit alpha' (855 aa).

GAF domains follow at residues 70 to 219 (SVEL…SIIL) and 251 to 428 (DVER…GWSL). 3',5'-cyclic GMP-binding positions include serine 92, serine 116, 164 to 167 (DKQT), and threonine 171. The PDEase domain occupies 481 to 814 (EEKQLVTILK…VEWKSLADEY (334 aa)). Histidine 557 acts as the Proton donor in catalysis. Positions 561, 597, 598, and 718 each coordinate a divalent metal cation. The disordered stretch occupies residues 823 to 855 (EMKKQEEGNTTEKAVEDSGGGGDDKKSKTCLML). A Cysteine methyl ester modification is found at cysteine 852. The S-geranylgeranyl cysteine moiety is linked to residue cysteine 852. A propeptide spans 853–855 (LML) (removed in mature form).

Belongs to the cyclic nucleotide phosphodiesterase family. Composed of two alpha' subunits that are associated with 3 smaller proteins of 11, 13, and 15 kDa. Requires a divalent metal cation as cofactor.

The protein resides in the cell membrane. It catalyses the reaction 3',5'-cyclic GMP + H2O = GMP + H(+). Functionally, as cone-specific cGMP phosphodiesterase, it plays an essential role in light detection and cone phototransduction by rapidly decreasing intracellular levels of cGMP. The protein is Cone cGMP-specific 3',5'-cyclic phosphodiesterase subunit alpha' (PDE6C) of Bos taurus (Bovine).